The chain runs to 283 residues: Acetylglutamate kinase (283 aa).

Substrate-binding positions include 63-64 (GG), arginine 85, and asparagine 179.

The protein belongs to the acetylglutamate kinase family. ArgB subfamily.

The protein resides in the cytoplasm. The catalysed reaction is N-acetyl-L-glutamate + ATP = N-acetyl-L-glutamyl 5-phosphate + ADP. It participates in amino-acid biosynthesis; L-arginine biosynthesis; N(2)-acetyl-L-ornithine from L-glutamate: step 2/4. Catalyzes the ATP-dependent phosphorylation of N-acetyl-L-glutamate. The chain is Acetylglutamate kinase from Clostridium kluyveri (strain NBRC 12016).